The sequence spans 369 residues: Biglycan (369 aa).

The N-terminal stretch at 1-16 (MWPLWPLAALLALSQA) is a signal peptide. A propeptide spanning residues 17–37 (LPFEQKAFWDFTLDDGLPMLN) is cleaved from the precursor. Ser-42 and Ser-48 each carry an O-linked (Xyl...) (glycosaminoglycan) serine glycan. Cystine bridges form between Cys-64/Cys-70 and Cys-68/Cys-77. 12 LRR repeats span residues 83–103 (KAVP…NNDI), 104–127 (SELR…NNKI), 128–151 (SKIH…KNHL), 152–172 (VEIP…DNRI), 173–196 (RKVP…GNPL), 197–221 (ENSG…EAKL), 222–242 (TGIP…HNKI), 243–266 (QAIE…HNQI), 267–290 (RMIE…NNKL), 291–313 (SRVP…TNNI), 314–343 (TKVG…NNPV), and 344–369 (PYWE…NYKK). Residues Ser-181 and Ser-199 are each glycosylated (O-linked (Xyl...) (glycosaminoglycan) serine). Asn-271 and Asn-312 each carry an N-linked (GlcNAc...) asparagine glycan. Cys-322 and Cys-355 are disulfide-bonded.

This sequence belongs to the small leucine-rich proteoglycan (SLRP) family. SLRP class I subfamily. As to quaternary structure, homodimer. Forms a ternary complex with MFAP2 and ELN. In terms of processing, the two attached glycosaminoglycan chains can be either chondroitin sulfate or dermatan sulfate. In terms of tissue distribution, found in several connective tissues, especially in articular cartilages.

It is found in the secreted. The protein localises to the extracellular space. It localises to the extracellular matrix. In terms of biological role, may be involved in collagen fiber assembly. This chain is Biglycan (BGN), found in Bos taurus (Bovine).